Here is a 780-residue protein sequence, read N- to C-terminus: RNA-binding protein Pasilla (780 aa).

3 disordered regions span residues 31-50 (LQHQNQHNSSPQQPQHQQLE), 76-113 (QPRHSTTTSSPSSTHSLASGGGSSSNSSNSSSSDSSSI), and 150-190 (QIES…ATAS). Low complexity-rich tracts occupy residues 79-91 (HSTTTSSPSSTHS), 99-113 (SSNSSNSSSSDSSSI), and 176-190 (PNGTPGAQTPTATAS). 3 consecutive KH domains span residues 273-340 (TYHM…MEFI), 366-432 (DKQV…CKMI), and 691-758 (KDSK…QYLI). The interval 674 to 693 (AQLGGLSKSPTPGDLSSKDS) is disordered. A required for RNA binding region spans residues 686-776 (GDLSSKDSKN…TKRARQIPLT (91 aa)).

Expressed in the central nervous system in mushroom body neurons (at protein level).

Its subcellular location is the nucleus. It localises to the cytoplasm. In terms of biological role, functions to regulate alternative splicing in neurons by binding pre-mRNA in a sequence-specific manner to activate exon inclusion. Plays a role in long-term memory formation by processing the unspliced Orb2-isoform A (Orb2A) mRNA and thereby controlling Orb2A protein abundance. The sequence is that of RNA-binding protein Pasilla from Drosophila melanogaster (Fruit fly).